The chain runs to 152 residues: Em-like protein GEA1 (152 aa).

Composition is skewed to basic and acidic residues over residues 1 to 17 and 32 to 63; these read MASKQLSREELDEKAKQ and EAQEHLAEGRSKGGQTRKEQLGHEGYQEIGHK. The segment at 1–63 is disordered; sequence MASKQLSREE…HEGYQEIGHK (63 aa). 4 repeat units span residues 44–63, 64–83, 84–103, and 104–123. Residues 44 to 123 form a 4 X 20 AA tandem repeats region; it reads GGQTRKEQLG…HEGYKEMGRK (80 aa). The segment at 116-152 is disordered; the sequence is GYKEMGRKGGLSTMEKSGGERAEEEGIEIDESKFTNK.

Belongs to the small hydrophilic plant seed protein family. In terms of tissue distribution, in seeds only. Specifically located to vascular bundles in the cotyledon and axis of the dry seed. Also found in the epiderm and outer layers of the cortex in the embryo axis.

Its function is as follows. It is thought to provide protection for the cytoplasm during the desiccation stage of embryo development. The protein is Em-like protein GEA1 (EM1) of Arabidopsis thaliana (Mouse-ear cress).